A 142-amino-acid polypeptide reads, in one-letter code: MFKHNEQQPEGFQISLKEALDNLAFNDAGLVAAIAQQHDSGEVLMMAWMNREAIEETLATGRVCYFSRSRGKLWRKGESSGQVQTLKELRIDCDGDALLVKVDQTGSACHTGRRDCFYWKADANNVTIDKAPIKDPKELYGK.

Aspartate 92 contacts Mg(2+). Position 93 (cysteine 93) interacts with Zn(2+). Aspartate 94 and aspartate 96 together coordinate Mg(2+). Zn(2+) is bound by residues cysteine 109 and cysteine 116.

The protein belongs to the PRA-CH family. In terms of assembly, homodimer. Mg(2+) is required as a cofactor. Requires Zn(2+) as cofactor.

Its subcellular location is the cytoplasm. The catalysed reaction is 1-(5-phospho-beta-D-ribosyl)-5'-AMP + H2O = 1-(5-phospho-beta-D-ribosyl)-5-[(5-phospho-beta-D-ribosylamino)methylideneamino]imidazole-4-carboxamide. It participates in amino-acid biosynthesis; L-histidine biosynthesis; L-histidine from 5-phospho-alpha-D-ribose 1-diphosphate: step 3/9. Functionally, catalyzes the hydrolysis of the adenine ring of phosphoribosyl-AMP. This chain is Phosphoribosyl-AMP cyclohydrolase, found in Alcanivorax borkumensis (strain ATCC 700651 / DSM 11573 / NCIMB 13689 / SK2).